The primary structure comprises 606 residues: MVERKKRKQIQRNNSESNRNQKRRISHDKINRDELVVYRILCPIDVVGGVIGKSGKVINAIRHNTKAKIKVFDQLHGCSQRVITIYCSVKEKQEEIGFTKSENEPLCCAQDALLKVYDAIVASDEENNTKTNVDRDDNKECRLLVPFSQSSSLIGKAGENIKRIRRRTRASVKVVSKDVSDPSHVCAMEYDNVVVISGEPESVKQALFAVSAIMYKINPRENIPLDSTSQDVPAASVIVPSDLSNSVYPQTGFYSNQDHILQQGAGVPSYFNALSVSDFQGYAETAANPVPVFASSLPVTHGFGGSSRSEELVFKVLCPLCNIMRVIGKGGSTIKRIREASGSCIEVNDSRTKCGDDECVIIVTATESPDDMKSMAVEAVLLLQEYINDEDAENVKMQLLVSSKVIGCVIGKSGSVINEIRKRTNANICISKGKKDDLVEVSGEVSSVRDALIQIVLRLREDVLGDKDSVATRKPPARTDNCSFLSGSSNAGYTLPSFMSSMASTSGFHGYGSFPAGDNVLGSTGPYSYGRLPSSSALEILIPAHAMSKVMGKGGGNLENIRRISGAMIEISASKTSHGDHIALLSGTLEQMRCAENLVQAFVMST.

Residues Met1–Ile10 are compositionally biased toward basic residues. The tract at residues Met1 to Ser26 is disordered. KH domains are found at residues Leu35–Thr99, Asn138–Val210, Glu311–Val380, Asn394–Ile455, and Ser535–Val599.

It is found in the nucleus. This is KH domain-containing protein At4g18375 from Arabidopsis thaliana (Mouse-ear cress).